The sequence spans 332 residues: MKVTFEQLKAAFNRVLISRGVDSETADACAEMFARTTESGVYSHGVNRFPRFIQQLDNGDIIPDAEAKRITTLGAIEQWDAQRSIGNLTAKKMMDRAIELAADHGIGLVALRNANHWMRGGSYGWQAAEKGYIGICWTNSIAVMPPWGAKECRIGTNPLIVAIPSTPITMVDMSMSMFSYGMLEVNRLAGRQLPVDGGFDDEGNLTKEPGVIEKNRRILPMGYWKGSGMSIVLDMIATLLSDGASVAEVTQDNSDEYGVSQIFIAIEVDKLIDGATRDAKLQRIMDYITTAERADENQAIRLPGHEFTTLLAENRRNGITVDDSVWAKIQAL.

His-44 (proton donor) is an active-site residue. NAD(+) is bound by residues 168–174 (ITMVDMS), 224–225 (WK), and 304–306 (GHE).

This sequence belongs to the LDH2/MDH2 oxidoreductase family. DlgD subfamily. As to quaternary structure, homodimer.

The protein localises to the cytoplasm. It carries out the reaction 3-dehydro-L-gulonate + NAD(+) = 2,3-dioxo-L-gulonate + NADH + H(+). It catalyses the reaction 3-dehydro-L-gulonate + NADP(+) = 2,3-dioxo-L-gulonate + NADPH + H(+). In terms of biological role, catalyzes the reduction of 2,3-diketo-L-gulonate in the presence of NADH, to form 3-keto-L-gulonate. This chain is 2,3-diketo-L-gulonate reductase, found in Escherichia coli O17:K52:H18 (strain UMN026 / ExPEC).